Consider the following 769-residue polypeptide: 5-methyltetrahydropteroyltriglutamate--homocysteine methyltransferase (769 aa).

Residues 16-19 (RELK) and Lys-118 each bind 5-methyltetrahydropteroyltri-L-glutamate. Residues 440-442 (IGS) and Glu-493 each bind L-homocysteine. L-methionine contacts are provided by residues 440–442 (IGS) and Glu-493. 5-methyltetrahydropteroyltri-L-glutamate contacts are provided by residues 524–525 (RC) and Trp-570. Residue Asp-608 coordinates L-homocysteine. Asp-608 provides a ligand contact to L-methionine. 5-methyltetrahydropteroyltri-L-glutamate is bound at residue Glu-614. Zn(2+)-binding residues include His-650, Cys-652, and Glu-674. The active-site Proton donor is the His-706. Cys-738 contributes to the Zn(2+) binding site.

It belongs to the vitamin-B12 independent methionine synthase family. Zn(2+) is required as a cofactor.

The catalysed reaction is 5-methyltetrahydropteroyltri-L-glutamate + L-homocysteine = tetrahydropteroyltri-L-glutamate + L-methionine. The protein operates within amino-acid biosynthesis; L-methionine biosynthesis via de novo pathway; L-methionine from L-homocysteine (MetE route): step 1/1. Catalyzes the transfer of a methyl group from 5-methyltetrahydrofolate to homocysteine resulting in methionine formation. The protein is 5-methyltetrahydropteroyltriglutamate--homocysteine methyltransferase of Acidiphilium cryptum (strain JF-5).